The chain runs to 334 residues: Holliday junction branch migration complex subunit RuvB (334 aa).

A large ATPase domain (RuvB-L) region spans residues 4–184 (ADRLIQPQDL…FGIPLRLEFY (181 aa)). ATP is bound by residues R24, G65, K68, T69, T70, 131 to 133 (EDY), R174, Y184, and R221. Residue T69 participates in Mg(2+) binding. Residues 185-255 (NVRDLSSIVA…VAQSALDLLD (71 aa)) form a small ATPAse domain (RuvB-S) region. Residues 258–334 (SEGFDYMDRK…YSHFDLIKPD (77 aa)) form a head domain (RuvB-H) region. Residues R294, R313, and R318 each coordinate DNA.

This sequence belongs to the RuvB family. Homohexamer. Forms an RuvA(8)-RuvB(12)-Holliday junction (HJ) complex. HJ DNA is sandwiched between 2 RuvA tetramers; dsDNA enters through RuvA and exits via RuvB. An RuvB hexamer assembles on each DNA strand where it exits the tetramer. Each RuvB hexamer is contacted by two RuvA subunits (via domain III) on 2 adjacent RuvB subunits; this complex drives branch migration. In the full resolvosome a probable DNA-RuvA(4)-RuvB(12)-RuvC(2) complex forms which resolves the HJ.

It is found in the cytoplasm. The enzyme catalyses ATP + H2O = ADP + phosphate + H(+). Functionally, the RuvA-RuvB-RuvC complex processes Holliday junction (HJ) DNA during genetic recombination and DNA repair, while the RuvA-RuvB complex plays an important role in the rescue of blocked DNA replication forks via replication fork reversal (RFR). RuvA specifically binds to HJ cruciform DNA, conferring on it an open structure. The RuvB hexamer acts as an ATP-dependent pump, pulling dsDNA into and through the RuvAB complex. RuvB forms 2 homohexamers on either side of HJ DNA bound by 1 or 2 RuvA tetramers; 4 subunits per hexamer contact DNA at a time. Coordinated motions by a converter formed by DNA-disengaged RuvB subunits stimulates ATP hydrolysis and nucleotide exchange. Immobilization of the converter enables RuvB to convert the ATP-contained energy into a lever motion, pulling 2 nucleotides of DNA out of the RuvA tetramer per ATP hydrolyzed, thus driving DNA branch migration. The RuvB motors rotate together with the DNA substrate, which together with the progressing nucleotide cycle form the mechanistic basis for DNA recombination by continuous HJ branch migration. Branch migration allows RuvC to scan DNA until it finds its consensus sequence, where it cleaves and resolves cruciform DNA. The protein is Holliday junction branch migration complex subunit RuvB of Shewanella amazonensis (strain ATCC BAA-1098 / SB2B).